A 493-amino-acid polypeptide reads, in one-letter code: Mitochondrial distribution and morphology protein 10 (493 aa).

It belongs to the MDM10 family. Component of the ER-mitochondria encounter structure (ERMES) or MDM complex, composed of MMM1, MDM10, MDM12 and MDM34. Associates with the mitochondrial outer membrane sorting assembly machinery SAM(core) complex, which consists of SAM35, SAM37 and SAM50, to form a SAM(holo) complex.

The protein localises to the mitochondrion outer membrane. Functionally, component of the ERMES/MDM complex, which serves as a molecular tether to connect the endoplasmic reticulum and mitochondria. Components of this complex are involved in the control of mitochondrial shape and protein biogenesis and may function in phospholipid exchange. MDM10 is involved in the late assembly steps of the general translocase of the mitochondrial outer membrane (TOM complex). Functions in the TOM40-specific route of the assembly of outer membrane beta-barrel proteins, including the association of TOM40 with the receptor TOM22 and small TOM proteins. Can associate with the SAM(core) complex as well as the MDM12-MMM1 complex, both involved in late steps of the major beta-barrel assembly pathway, that is responsible for biogenesis of all outer membrane beta-barrel proteins. May act as a switch that shuttles between both complexes and channels precursor proteins into the TOM40-specific pathway. Plays a role in mitochondrial morphology and in the inheritance of mitochondria. This chain is Mitochondrial distribution and morphology protein 10, found in Saccharomyces cerevisiae (strain ATCC 204508 / S288c) (Baker's yeast).